Here is a 68-residue protein sequence, read N- to C-terminus: Disintegrin EMS11A (68 aa).

Residues 1 to 65 form the Disintegrin domain; it reads NSAHPCCDPV…DCPRNRYKGK (65 aa). Cystine bridges form between Cys6-Cys29, Cys20-Cys26, Cys25-Cys50, and Cys38-Cys57. The Cell attachment site; atypical (MLD) signature appears at 42 to 44; it reads MLD.

The protein belongs to the disintegrin family. Dimeric disintegrin subfamily. In terms of assembly, heterodimer; disulfide-linked. As to expression, expressed by the venom gland.

It localises to the secreted. Its function is as follows. Poor inhibitor of platelet aggregation. The disintegrin inhibits the adhesion of both the alpha-4/beta-1 (ITGA4/ITGB1) and the alpha-5/beta-1 (ITGA5/ITGB1) integrins to VCAM-1 and fibronectin respectively with almost the same degree of specificity. Inhibition on alpha-IIb/beta-3 (ITGA2B/ITGB3) is low. The protein is Disintegrin EMS11A of Echis multisquamatus (Central Asian sand viper).